The sequence spans 920 residues: WD repeat-containing protein 47 (920 aa).

The LisH domain maps to 10–42 (KEVEIIKLILDFLNSKKLHISMLALEKESGVIN). One can recognise a CTLH domain in the interval 45–102 (FSDDMLFLRQLILDGQWDEVLQFIQPLECMEKFDKKRFRYIILKQKFLEALCVNNAMS). Threonine 285 is subject to Phosphothreonine. Serine 289, serine 292, serine 297, and serine 312 each carry phosphoserine. The span at 371-380 (YEESPERSDT) shows a compositional bias: basic and acidic residues. The interval 371 to 422 (YEESPERSDTPVEAQQPVSSEAMCQGSGLEKEPANGAQNPVPAKQEKNELRD) is disordered. Residue serine 423 is modified to Phosphoserine. Residues 501–594 (LNQQCSGSKN…RSKGEEDDKS (94 aa)) form a disordered region. The span at 506 to 523 (SGSKNNGSNNSSVTSFST) shows a compositional bias: low complexity. The span at 538 to 552 (NIHTSTPRNPGSTNH) shows a compositional bias: polar residues. A Phosphothreonine modification is found at threonine 543. WD repeat units follow at residues 605–644 (EDTQ…DASA), 660–699 (HHKG…CNAT), 707–749 (MHDG…GQGL), 754–792 (GHTG…CVRV), 799–838 (GTGS…MVQS), 841–880 (PHSS…TKQL), and 887–919 (EHKD…WTYS).

In terms of assembly, interacts with MAP1S (via WD repeats). In terms of tissue distribution, enriched in the nervous system (at protein level).

It localises to the cytoplasm. Its subcellular location is the cytoskeleton. The sequence is that of WD repeat-containing protein 47 (Wdr47) from Mus musculus (Mouse).